Here is a 177-residue protein sequence, read N- to C-terminus: Large ribosomal subunit protein uL6 (177 aa).

The protein belongs to the universal ribosomal protein uL6 family. In terms of assembly, part of the 50S ribosomal subunit.

Functionally, this protein binds to the 23S rRNA, and is important in its secondary structure. It is located near the subunit interface in the base of the L7/L12 stalk, and near the tRNA binding site of the peptidyltransferase center. This Mesorhizobium japonicum (strain LMG 29417 / CECT 9101 / MAFF 303099) (Mesorhizobium loti (strain MAFF 303099)) protein is Large ribosomal subunit protein uL6.